The following is a 386-amino-acid chain: Probable mannan endo-1,4-beta-mannosidase A (386 aa).

Positions 1–21 are cleaved as a signal peptide; the sequence is MKLNPSLLTAAGLVSAQLASA. Substrate-binding residues include Trp95 and Asn207. Glu208 serves as the catalytic Proton donor. Tyr283 is a binding site for substrate. Catalysis depends on Glu316, which acts as the Nucleophile. Asn336 is a glycosylation site (N-linked (GlcNAc...) asparagine). Trp346 provides a ligand contact to substrate.

Belongs to the glycosyl hydrolase 5 (cellulase A) family.

The protein resides in the secreted. It carries out the reaction Random hydrolysis of (1-&gt;4)-beta-D-mannosidic linkages in mannans, galactomannans and glucomannans.. Functionally, endo-1,4-mannanase, a crucial enzyme for depolymerization of seed galactomannans and wood galactoglucomannans. In Aspergillus flavus (strain ATCC 200026 / FGSC A1120 / IAM 13836 / NRRL 3357 / JCM 12722 / SRRC 167), this protein is Probable mannan endo-1,4-beta-mannosidase A (manA).